We begin with the raw amino-acid sequence, 80 residues long: N-V protease (80 aa).

Belongs to the peptidase S8 family. In terms of assembly, monomer. Body cavity.

It localises to the secreted. Inhibited by the serine protease inhibitors DFP, PMSF and TLCK. Not inhibited by the serine protease inhibitors aprotinin, elastinal, SBTI and benzamidine, the cysteine protease inhibitors iodoacetate and E64, or the metalloprotease inhibitors EDTA and EGTA. Its function is as follows. Serine protease. Hydrolyzes the alpha chains of fibrin and fibrinogen completely, has lower activity on the beta and gamma chains of fibrin and fibrinogen. This is N-V protease from Alitta virens (Sandworm).